A 77-amino-acid polypeptide reads, in one-letter code: Large ribosomal subunit protein bL28 (77 aa).

The protein belongs to the bacterial ribosomal protein bL28 family.

The protein is Large ribosomal subunit protein bL28 of Polaromonas sp. (strain JS666 / ATCC BAA-500).